We begin with the raw amino-acid sequence, 306 residues long: Large ribosomal subunit protein uL18 (306 aa).

Belongs to the universal ribosomal protein uL18 family. As to quaternary structure, component of the large ribosomal subunit (LSU).

The protein localises to the cytoplasm. It localises to the nucleus. Its function is as follows. Component of the ribosome, a large ribonucleoprotein complex responsible for the synthesis of proteins in the cell. The small ribosomal subunit (SSU) binds messenger RNAs (mRNAs) and translates the encoded message by selecting cognate aminoacyl-transfer RNA (tRNA) molecules. The large subunit (LSU) contains the ribosomal catalytic site termed the peptidyl transferase center (PTC), which catalyzes the formation of peptide bonds, thereby polymerizing the amino acids delivered by tRNAs into a polypeptide chain. The nascent polypeptides leave the ribosome through a tunnel in the LSU and interact with protein factors that function in enzymatic processing, targeting, and the membrane insertion of nascent chains at the exit of the ribosomal tunnel. The polypeptide is Large ribosomal subunit protein uL18 (RPL5) (Theileria annulata).